Reading from the N-terminus, the 422-residue chain is Trigger factor (422 aa).

The PPIase FKBP-type domain occupies 158-242 (GDFAVVSLES…VKGLRKKELP (85 aa)).

Belongs to the FKBP-type PPIase family. Tig subfamily.

It is found in the cytoplasm. The catalysed reaction is [protein]-peptidylproline (omega=180) = [protein]-peptidylproline (omega=0). Its function is as follows. Involved in protein export. Acts as a chaperone by maintaining the newly synthesized protein in an open conformation. Functions as a peptidyl-prolyl cis-trans isomerase. The chain is Trigger factor from Solibacter usitatus (strain Ellin6076).